Reading from the N-terminus, the 146-residue chain is Extracellular globin-2A (146 aa).

In terms of domain architecture, Globin spans 4 to 146 (HCGPLQRLKV…EVIYPGIKHD (143 aa)). An intrachain disulfide couples Cys5 to Cys134. His97 is a heme b binding site.

This sequence belongs to the globin family. Disulfide bonded trimer of chains IIA, IIB, and IIC.

This is Extracellular globin-2A from Tylorrhynchus heterochetus (Japanese palolo worm).